A 569-amino-acid chain; its full sequence is Estrogen receptor (569 aa).

Residues 1 to 151 (MYPKEEHSAG…GFDSGKETRF (151 aa)) form a modulating region. Residues 28–37 (PTQTFGTSSP) are compositionally biased toward polar residues. The tract at residues 28–65 (PTQTFGTSSPAEPASVGYYPAPPDPHEEHLQTLGGGSS) is disordered. 2 consecutive NR C4-type zinc fingers follow at residues 152 to 172 (CAVC…CEGC) and 188 to 212 (CPAT…LRKC). The nuclear receptor DNA-binding region spans 152 to 217 (CAVCSDYASG…RLRKCYEVGM (66 aa)). Residues 218–278 (MKGGIRKDRG…SGGVVSTLCM (61 aa)) are hinge. Residues 223-271 (RKDRGGRSVRRERRRSSNEDRDKSSSDQCSRAGVRTTGPQDKRKKRSGG) form a disordered region. A compositionally biased stretch (basic and acidic residues) spans 237–247 (RSSNEDRDKSS). One can recognise an NR LBD domain in the interval 279 to 515 (SPDQVLLLLL…DLLLEMLDAQ (237 aa)). A compositionally biased stretch (polar residues) spans 523-532 (VQRVWSQSEK). Residues 523–569 (VQRVWSQSEKNPPSTPTTSSSSSNNSPRGGAAAIQSNGACHSHSPDP) form a disordered region. The span at 538–549 (PTTSSSSSNNSP) shows a compositional bias: low complexity.

It belongs to the nuclear hormone receptor family. NR3 subfamily. Binds DNA as a homodimer. Can form a heterodimer with ER-beta.

The protein localises to the nucleus. Its function is as follows. The steroid hormones and their receptors are involved in the regulation of eukaryotic gene expression and affect cellular proliferation and differentiation in target tissues. The protein is Estrogen receptor (esr1) of Danio rerio (Zebrafish).